A 96-amino-acid chain; its full sequence is Myosuppressin (96 aa).

The signal sequence occupies residues 1–24 (MALGNGYYCAVVCVVLACASVVLC). A propeptide spanning residues 25–80 (APAQLCAGAADDDPRAARFCQALNTFLELYAEAAGEQVPEYQALVRDYPQLLDTGM) is cleaved from the precursor. Gln83 carries the pyrrolidone carboxylic acid; partial modification. The residue at position 92 (Phe92) is a Phenylalanine amide. Residue Arg96 is a propeptide.

The protein belongs to the myosuppressin family. As to expression, expressed in corpora cardiaca (CC), corpora allata (CA), antennal lobe (AL) and gnathal ganglion (GNG) (at protein level). In its non-pyroglutamate form, expression in GNG detected in all animals, in AL, CC and in CA in most animals (at protein level). In its pyroglutamate form, expression in CC, CA and GNG detected in all animals, in AL in some animals (at protein level).

The protein resides in the secreted. Its function is as follows. Myoinhibiting neuropeptide. The sequence is that of Myosuppressin from Agrotis ipsilon (Black cutworm moth).